The primary structure comprises 429 residues: Phosphoribosylamine--glycine ligase (429 aa).

Residues 109 to 316 (KDFLARHQIP…LVELCLAAID (208 aa)) enclose the ATP-grasp domain. 135 to 196 (VREQGAPIVV…EEFLDGEEAS (62 aa)) is an ATP binding site. The disordered stretch occupies residues 212 to 234 (SQDHKRVGDKDTGPNTGGMGAYS). Over residues 213 to 223 (QDHKRVGDKDT) the composition is skewed to basic and acidic residues. Mg(2+) is bound by residues Glu-286 and Asn-288.

Belongs to the GARS family. Mg(2+) is required as a cofactor. Requires Mn(2+) as cofactor.

It catalyses the reaction 5-phospho-beta-D-ribosylamine + glycine + ATP = N(1)-(5-phospho-beta-D-ribosyl)glycinamide + ADP + phosphate + H(+). It functions in the pathway purine metabolism; IMP biosynthesis via de novo pathway; N(1)-(5-phospho-D-ribosyl)glycinamide from 5-phospho-alpha-D-ribose 1-diphosphate: step 2/2. This is Phosphoribosylamine--glycine ligase from Vibrio vulnificus (strain CMCP6).